Consider the following 348-residue polypeptide: Dihydroorotase (348 aa).

Zn(2+) is bound by residues histidine 17 and histidine 19. Residues 19-21 and asparagine 45 each bind substrate; that span reads HLR. The Zn(2+) site is built by lysine 103, histidine 140, and histidine 178. At lysine 103 the chain carries N6-carboxylysine. Histidine 140 lines the substrate pocket. Leucine 223 contributes to the substrate binding site. Residue aspartate 251 coordinates Zn(2+). Residue aspartate 251 is part of the active site. The substrate site is built by histidine 255 and alanine 267.

It belongs to the metallo-dependent hydrolases superfamily. DHOase family. Class II DHOase subfamily. In terms of assembly, homodimer. Requires Zn(2+) as cofactor.

The enzyme catalyses (S)-dihydroorotate + H2O = N-carbamoyl-L-aspartate + H(+). It participates in pyrimidine metabolism; UMP biosynthesis via de novo pathway; (S)-dihydroorotate from bicarbonate: step 3/3. Its function is as follows. Catalyzes the reversible cyclization of carbamoyl aspartate to dihydroorotate. The sequence is that of Dihydroorotase from Salmonella typhimurium (strain LT2 / SGSC1412 / ATCC 700720).